The chain runs to 83 residues: Large ribosomal subunit protein bL27 (83 aa).

The interval 1-22 (MAHKKGQGSTRNGRDSHSKRLG) is disordered.

This sequence belongs to the bacterial ribosomal protein bL27 family.

This chain is Large ribosomal subunit protein bL27, found in Protochlamydia amoebophila (strain UWE25).